The following is a 129-amino-acid chain: Follitropin subunit beta (129 aa).

The N-terminal stretch at 1-20 (MKTLQFFFLFCCWKAICCNS) is a signal peptide. Intrachain disulfides connect Cys-21/Cys-69, Cys-35/Cys-84, Cys-38/Cys-122, Cys-46/Cys-100, Cys-50/Cys-102, and Cys-105/Cys-112. N-linked (GlcNAc...) asparagine glycosylation is found at Asn-25 and Asn-42.

The protein belongs to the glycoprotein hormones subunit beta family. Heterodimer. The active follitropin is a heterodimer composed of an alpha chain/CGA shared with other hormones and a unique beta chain/FSHB shown here.

It localises to the secreted. Functionally, together with the alpha chain CGA constitutes follitropin, the follicle-stimulating hormone, and provides its biological specificity to the hormone heterodimer. Binds FSHR, a G protein-coupled receptor, on target cells to activate downstream signaling pathways. Follitropin is involved in follicle development and spermatogenesis in reproductive organs. The sequence is that of Follitropin subunit beta (FSHB) from Pan troglodytes (Chimpanzee).